Here is a 532-residue protein sequence, read N- to C-terminus: Cytokinin dehydrogenase 1 (532 aa).

Residues 1 to 17 (MAAIYLLIAALIASSHA) form the signal peptide. N-linked (GlcNAc...) asparagine glycans are attached at residues asparagine 52 and asparagine 63. In terms of domain architecture, FAD-binding PCMH-type spans 65 to 244 (TAALPAAVLF…TRARVAVEPA (180 aa)). FAD-binding residues include phenylalanine 100, glycine 102, arginine 103, and glycine 104. Position 105 is a pros-8alpha-FAD histidine (histidine 105). The FAD site is built by serine 106 and glutamine 110. The N-linked (GlcNAc...) asparagine glycan is linked to asparagine 133. FAD contacts are provided by aspartate 168, threonine 173, serine 179, valine 183, and isoleucine 234. Asparagine 321 and asparagine 432 each carry an N-linked (GlcNAc...) asparagine glycan. FAD-binding residues include tyrosine 490, serine 525, and glutamine 528.

The protein belongs to the oxygen-dependent FAD-linked oxidoreductase family. As to quaternary structure, monomer. The cofactor is FAD.

It localises to the secreted. The protein resides in the extracellular space. The catalysed reaction is N(6)-dimethylallyladenine + A + H2O = 3-methyl-2-butenal + adenine + AH2. Functionally, catalyzes the oxidation of cytokinins, a family of N(6)-substituted adenine derivatives that are plant hormones, where the substituent is an isopentenyl group. The chain is Cytokinin dehydrogenase 1 (CKX1) from Oryza sativa subsp. japonica (Rice).